Reading from the N-terminus, the 60-residue chain is uncharacterized protein (60 aa).

Residues 1–21 (MNKLLKLFFITIIIYNNIAFA) form the signal peptide.

This is an uncharacterized protein from Rickettsia prowazekii (strain Madrid E).